Consider the following 350-residue polypeptide: Dihydroorotate dehydrogenase (quinone) (350 aa).

FMN-binding positions include 61–65 and T85; that span reads AGLDK. K65 is a substrate binding site. 110 to 114 contacts substrate; it reads NRMGF. Positions 139 and 172 each coordinate FMN. N172 contributes to the substrate binding site. The active-site Nucleophile is S175. Substrate is bound at residue N177. The FMN site is built by K217 and T245. 246–247 contacts substrate; that stretch reads NT. FMN-binding positions include G268, G297, and 318–319; that span reads YS.

This sequence belongs to the dihydroorotate dehydrogenase family. Type 2 subfamily. In terms of assembly, monomer. Requires FMN as cofactor.

It localises to the cell membrane. It carries out the reaction (S)-dihydroorotate + a quinone = orotate + a quinol. The protein operates within pyrimidine metabolism; UMP biosynthesis via de novo pathway; orotate from (S)-dihydroorotate (quinone route): step 1/1. In terms of biological role, catalyzes the conversion of dihydroorotate to orotate with quinone as electron acceptor. This Flavobacterium lutescens protein is Dihydroorotate dehydrogenase (quinone).